The chain runs to 325 residues: GMP reductase (325 aa).

The active-site Thioimidate intermediate is the C173. NADP(+) is bound at residue 202 to 225 (IIADGGIHEHGDIAKSIRFGATMV).

It belongs to the IMPDH/GMPR family. GuaC type 2 subfamily.

It catalyses the reaction IMP + NH4(+) + NADP(+) = GMP + NADPH + 2 H(+). Catalyzes the irreversible NADPH-dependent deamination of GMP to IMP. It functions in the conversion of nucleobase, nucleoside and nucleotide derivatives of G to A nucleotides, and in maintaining the intracellular balance of A and G nucleotides. The polypeptide is GMP reductase (Albidiferax ferrireducens (strain ATCC BAA-621 / DSM 15236 / T118) (Rhodoferax ferrireducens)).